The chain runs to 130 residues: Glycine cleavage system H protein (130 aa).

The region spanning 25–106 (MALIGISDFA…PFDSWMIKVK (82 aa)) is the Lipoyl-binding domain. N6-lipoyllysine is present on Lys66.

Belongs to the GcvH family. As to quaternary structure, the glycine cleavage system is composed of four proteins: P, T, L and H. Requires (R)-lipoate as cofactor.

Its function is as follows. The glycine cleavage system catalyzes the degradation of glycine. The H protein shuttles the methylamine group of glycine from the P protein to the T protein. This is Glycine cleavage system H protein from Leptospira interrogans serogroup Icterohaemorrhagiae serovar copenhageni (strain Fiocruz L1-130).